Consider the following 363-residue polypeptide: Type 3 secretion system translocon protein SctB (363 aa).

Residues 1–16 (MEIQNTKPTQTLYTDI) show a composition bias toward polar residues. The disordered stretch occupies residues 1-30 (MEIQNTKPTQTLYTDISTKQTQSSSETQKS). The segment covering 17–30 (STKQTQSSSETQKS) has biased composition (low complexity). The ipgC chaperone binding domain stretch occupies residues 33-73 (YQQIAAHIPLNVGKNPVLTTTLNDDQLLKLSEQVQHDSEII). Residues 99–120 (ISSLSSNAVSLIISVAVLLSAL) traverse the membrane as a helical segment.

It belongs to the SctB/SipC family. As to quaternary structure, the core secretion machinery of the T3SS is composed of approximately 20 different proteins, including cytoplasmic components, a base, an export apparatus and a needle. This subunit is involved in the formation of a pore, called the translocon, in host membrane. Interacts with IpaB/SctE. Interacts with the molecular chaperone IpgC, which prevents premature association with IpaB/SctE within the cytoplasm of Shigella cells. Does not interact with CDC42 or RAC1 GTPases in vitro.

The protein localises to the secreted. It is found in the host membrane. Interaction with the membrane is affected by the pH. Component of the type III secretion system (T3SS), also called injectisome, which is used to inject bacterial effector proteins into eukaryotic host cells. IpaB/SctE and IpaC/SctB are inserted into the host membrane where they form a pore and allow the translocation of effector proteins into the cytosol of target cells. Induction and secretion of IpaC/SctB comprise the final step in triggering the induction of full type III secretion. Its function is as follows. Required for efficient dissemination. Necessary for lysis of the two cellular membranes that surround bacteria in protrusions during cell-to-cell spread. Contribute to actin nucleation in vitro, which may be a necessary step in Shigella invasion. This Shigella flexneri protein is Type 3 secretion system translocon protein SctB.